We begin with the raw amino-acid sequence, 98 residues long: DNA-binding protein HU (98 aa).

This sequence belongs to the bacterial histone-like protein family. As to quaternary structure, homodimer.

Functionally, histone-like DNA-binding protein which is capable of wrapping DNA to stabilize it, and thus to prevent its denaturation under extreme environmental conditions. This Campylobacter jejuni subsp. jejuni serotype O:2 (strain ATCC 700819 / NCTC 11168) protein is DNA-binding protein HU (hup).